The chain runs to 64 residues: Beta-insect depressant toxin BmKIT4 (64 aa).

The LCN-type CS-alpha/beta domain maps to 1–61 (DGYIRGSNGC…TWKSESNTCG (61 aa)). Disulfide bonds link Cys-10-Cys-60, Cys-14-Cys-35, Cys-21-Cys-42, and Cys-25-Cys-44. Cys-60 is subject to Cysteine amide.

The protein belongs to the long (4 C-C) scorpion toxin superfamily. Sodium channel inhibitor family. Beta subfamily. Expressed by the venom gland.

The protein resides in the secreted. Its function is as follows. Depressant insect beta-toxins cause a transient contraction paralysis followed by a slow flaccid paralysis. They bind voltage-independently at site-4 of sodium channels (Nav) and shift the voltage of activation toward more negative potentials thereby affecting sodium channel activation and promoting spontaneous and repetitive firing. This toxin is active only on insects. This chain is Beta-insect depressant toxin BmKIT4, found in Olivierus martensii (Manchurian scorpion).